Here is a 187-residue protein sequence, read N- to C-terminus: UPF0301 protein GOX1459 (187 aa).

The protein belongs to the UPF0301 (AlgH) family.

This is UPF0301 protein GOX1459 from Gluconobacter oxydans (strain 621H) (Gluconobacter suboxydans).